Reading from the N-terminus, the 234-residue chain is Ponticulin-like protein J (234 aa).

The first 20 residues, Met-1–Ala-20, serve as a signal peptide directing secretion. Residues Asn-19, Asn-143, Asn-166, and Asn-206 are each glycosylated (N-linked (GlcNAc...) asparagine). The tract at residues Thr-115–Asn-213 is disordered. Low complexity predominate over residues Lys-154–Thr-195. A lipid anchor (GPI-like-anchor amidated asparagine) is attached at Asn-212. A glycan (N-linked (GlcNAc...) asparagine) is linked at Asn-213. The propeptide at Asn-213–Phe-234 is removed in mature form.

Belongs to the ponticulin family. The GPI-like-anchor contains a phosphoceramide group, rather than a phosphatidyl group.

The protein resides in the cell membrane. Its function is as follows. Binds F-actin and nucleates actin assembly. This Dictyostelium discoideum (Social amoeba) protein is Ponticulin-like protein J (ponJ).